The primary structure comprises 88 residues: Putative septation protein SpoVG (88 aa).

It belongs to the SpoVG family.

Its function is as follows. Could be involved in septation. In Desulforudis audaxviator (strain MP104C), this protein is Putative septation protein SpoVG.